The chain runs to 316 residues: Protein lifeguard 2 (316 aa).

The segment at 1 to 49 is disordered; sequence MTQGKLSVANKAPGTEGQQQANGEKKDAPAVPSAPPSYEEATSGEGLKA. The next 3 helical transmembrane spans lie at 106-126, 138-158, and 165-185; these read VYTI…LFTF, PGWY…LACC, and FPWN…LTGM. The N-linked (GlcNAc...) asparagine glycan is linked to asparagine 191. 4 helical membrane passes run 194-214, 225-245, 251-271, and 290-310; these read SVLL…IFSF, GVLF…AILL, PWLH…FLAF, and IFGA…FLQL.

Belongs to the BI1 family. LFG subfamily. Interacts with FAS/TNFRSF6 and BAX. In terms of tissue distribution, expressed at high levels on dendrites and to a lesser extent on the soma and axons of neurons in various regions of brain.

The protein resides in the cell membrane. It localises to the membrane raft. Its subcellular location is the postsynaptic cell membrane. Functionally, antiapoptotic protein which protects cells uniquely from Fas-induced apoptosis. Regulates Fas-mediated apoptosis in neurons by interfering with caspase-8 activation. Plays a role in cerebellar development by affecting cerebellar size, internal granular layer (IGL) thickness, and Purkinje cell (PC) development. This Rattus norvegicus (Rat) protein is Protein lifeguard 2 (Faim2).